The chain runs to 171 residues: CDP-archaeol synthase (171 aa).

5 helical membrane passes run 7–27, 54–74, 84–104, 115–135, and 141–161; these read IFWAFWYILPAYFANASPVLV, GFIGGVLIGTLVGIVQYFITP, VKLAFLLSFGALIGDLVGSFI, PAIGLDQLGFLISALAFAYPV, and GQIIFLLVVSPFIHWGANYFA.

Belongs to the CDP-archaeol synthase family. Requires Mg(2+) as cofactor.

The protein localises to the cell membrane. It carries out the reaction 2,3-bis-O-(geranylgeranyl)-sn-glycerol 1-phosphate + CTP + H(+) = CDP-2,3-bis-O-(geranylgeranyl)-sn-glycerol + diphosphate. The protein operates within membrane lipid metabolism; glycerophospholipid metabolism. Its function is as follows. Catalyzes the formation of CDP-2,3-bis-(O-geranylgeranyl)-sn-glycerol (CDP-archaeol) from 2,3-bis-(O-geranylgeranyl)-sn-glycerol 1-phosphate (DGGGP) and CTP. This reaction is the third ether-bond-formation step in the biosynthesis of archaeal membrane lipids. The protein is CDP-archaeol synthase of Thermococcus kodakarensis (strain ATCC BAA-918 / JCM 12380 / KOD1) (Pyrococcus kodakaraensis (strain KOD1)).